Here is a 547-residue protein sequence, read N- to C-terminus: Pyochelin synthase PchD (547 aa).

It belongs to the ATP-dependent AMP-binding enzyme family.

It catalyses the reaction salicylate + holo-[ACP] + ATP = salicyl-[ACP] + AMP + diphosphate. Its pathway is siderophore biosynthesis. The protein operates within antifungal biosynthesis. Its function is as follows. Involved in the biosynthesis of the siderophore pyochelin. Specifically adenylates salicylate and loads it onto the holo form of PchE via a thioester linkage to the phosphopanthetheine moiety. Is also involved in the synthesis of the antifungal antibiotic dihydroaeruginoic acid (Dha or hydroxyphenyl-thiazolinyl-carboxylate), a precursor of pyochelin. This is Pyochelin synthase PchD from Pseudomonas aeruginosa (strain ATCC 15692 / DSM 22644 / CIP 104116 / JCM 14847 / LMG 12228 / 1C / PRS 101 / PAO1).